Consider the following 155-residue polypeptide: UPF0303 protein lp_3613 (155 aa).

This sequence belongs to the UPF0303 family.

The sequence is that of UPF0303 protein lp_3613 from Lactiplantibacillus plantarum (strain ATCC BAA-793 / NCIMB 8826 / WCFS1) (Lactobacillus plantarum).